The primary structure comprises 522 residues: Ribonuclease Y (522 aa).

Residues 7–23 traverse the membrane as a helical segment; it reads SGSSAAVISGLVGFYIS. The KH domain maps to 212-278; sequence LTNLVHLNDD…TKTLELLIQD (67 aa). An HD domain is found at 338-431; it reads ALSHTLEVAH…VCAADALSAA (94 aa).

It belongs to the RNase Y family.

It localises to the cell membrane. Its function is as follows. Endoribonuclease that initiates mRNA decay. This Sulfurimonas denitrificans (strain ATCC 33889 / DSM 1251) (Thiomicrospira denitrificans (strain ATCC 33889 / DSM 1251)) protein is Ribonuclease Y.